A 115-amino-acid chain; its full sequence is Phosphoribosyl-AMP cyclohydrolase (115 aa).

Aspartate 80 contributes to the Mg(2+) binding site. Position 81 (cysteine 81) interacts with Zn(2+). Residues aspartate 82 and aspartate 84 each coordinate Mg(2+). Zn(2+) is bound by residues cysteine 97 and cysteine 104.

This sequence belongs to the PRA-CH family. Homodimer. Mg(2+) is required as a cofactor. Zn(2+) serves as cofactor.

Its subcellular location is the cytoplasm. The enzyme catalyses 1-(5-phospho-beta-D-ribosyl)-5'-AMP + H2O = 1-(5-phospho-beta-D-ribosyl)-5-[(5-phospho-beta-D-ribosylamino)methylideneamino]imidazole-4-carboxamide. It participates in amino-acid biosynthesis; L-histidine biosynthesis; L-histidine from 5-phospho-alpha-D-ribose 1-diphosphate: step 3/9. In terms of biological role, catalyzes the hydrolysis of the adenine ring of phosphoribosyl-AMP. The polypeptide is Phosphoribosyl-AMP cyclohydrolase (Mycolicibacterium paratuberculosis (strain ATCC BAA-968 / K-10) (Mycobacterium paratuberculosis)).